The chain runs to 184 residues: ATP synthase subunit b, chloroplastic (184 aa).

A helical transmembrane segment spans residues 31-53 (LINLGIVISLLIYFGKGVLSNLL).

Belongs to the ATPase B chain family. In terms of assembly, F-type ATPases have 2 components, F(1) - the catalytic core - and F(0) - the membrane proton channel. F(1) has five subunits: alpha(3), beta(3), gamma(1), delta(1), epsilon(1). F(0) has four main subunits: a(1), b(1), b'(1) and c(10-14). The alpha and beta chains form an alternating ring which encloses part of the gamma chain. F(1) is attached to F(0) by a central stalk formed by the gamma and epsilon chains, while a peripheral stalk is formed by the delta, b and b' chains.

It is found in the plastid. The protein resides in the chloroplast thylakoid membrane. Its function is as follows. F(1)F(0) ATP synthase produces ATP from ADP in the presence of a proton or sodium gradient. F-type ATPases consist of two structural domains, F(1) containing the extramembraneous catalytic core and F(0) containing the membrane proton channel, linked together by a central stalk and a peripheral stalk. During catalysis, ATP synthesis in the catalytic domain of F(1) is coupled via a rotary mechanism of the central stalk subunits to proton translocation. Functionally, component of the F(0) channel, it forms part of the peripheral stalk, linking F(1) to F(0). This Aneura mirabilis (Parasitic liverwort) protein is ATP synthase subunit b, chloroplastic.